The chain runs to 512 residues: Ribose import ATP-binding protein RbsA (512 aa).

2 consecutive ABC transporter domains span residues 6 to 242 and 252 to 496; these read LELR…VNRE and VPAG…TGAQ. 38 to 45 lines the ATP pocket; that stretch reads GENGAGKS.

It belongs to the ABC transporter superfamily. Ribose importer (TC 3.A.1.2.1) family. The complex is composed of an ATP-binding protein (RbsA), two transmembrane proteins (RbsC) and a solute-binding protein (RbsB).

The protein localises to the cell inner membrane. The enzyme catalyses D-ribose(out) + ATP + H2O = D-ribose(in) + ADP + phosphate + H(+). Part of the ABC transporter complex RbsABC involved in ribose import. Responsible for energy coupling to the transport system. This Pseudomonas putida (strain ATCC 47054 / DSM 6125 / CFBP 8728 / NCIMB 11950 / KT2440) protein is Ribose import ATP-binding protein RbsA.